The chain runs to 67 residues: DNA-directed RNA polymerase subunit Rpo10 (67 aa).

4 residues coordinate Zn(2+): C7, C10, C44, and C45.

It belongs to the archaeal Rpo10/eukaryotic RPB10 RNA polymerase subunit family. In terms of assembly, part of the RNA polymerase complex. Requires Zn(2+) as cofactor.

The protein resides in the cytoplasm. The enzyme catalyses RNA(n) + a ribonucleoside 5'-triphosphate = RNA(n+1) + diphosphate. Functionally, DNA-dependent RNA polymerase (RNAP) catalyzes the transcription of DNA into RNA using the four ribonucleoside triphosphates as substrates. The chain is DNA-directed RNA polymerase subunit Rpo10 from Caldivirga maquilingensis (strain ATCC 700844 / DSM 13496 / JCM 10307 / IC-167).